A 2609-amino-acid chain; its full sequence is MDRKANAYSKSVELLSRLEGCPSEKVLLEELRKLRGFIRNDIPSNFFPQLFITDNGFAAIKKAVTKLNFQSLLSLDIFECCLQILGIATSYTILRSWLLSRKHIEAWIELAIRRMFYSFCAIQDDSNISIYAIGTSSKTDSSIQAASPNEDLKSEGAQEIDSQSETVSISSDVDYDEDRKDLKKAKICSAYYLKTRLLLAVLSFAQNDSTFSLLKLVPSLQDNTNASLVELSRVVEAAIQKLSIKPLAFPNVLPQVLLLCPSISIFNLILLHLRALIRSSPENAIKIGYSKTMHFLLTYLFEPPTSFPLSDVSKDLLNEITLHCATFGVSNASTAKVLRTYLKTKSEFLRTWLLKALSHLVAPSFYFNPSTKGYSSIDFTLSSPVMPINGYSVSLWLNIESLMNDDGNYAPTTLFLISDFLKSTLFRLLLDASKKTVVVHIGSSKDTCVVNFSTPITNFFSKIYKDNPSLNPPSWHLITLVHRNEKSSLPNLELYIDGSAVERAACPYPFLSSTLQPLYVSLGPSIGSRNQSTPSTLAPNVAETDALVSENTGAASQKTSKSYKTNDSLKVPPLVPLLIGTTRFFPVPLVSSQIAIISSLGPSYSGCFQGPINDYMTYKASTALTLEIQDSKSNTEDLLHSIQAFSRSPIAFMSCARDYVDIMDLQLSDFCSFSVLETLKKLENQYYSHVYINRAVSSYDKAFSAEQPSFGVSSGSVTPIIMQSISDAIYNIGGSSILLELVGTAETEAELNFGLQVFFSSIEDNWRFSENVEQTHSFEILAQILHSKSHLLVSEETLKIIALMSGVHHTRFKHPLVMNPLLFRYLILDFDLWSKAPNSNLFVQQLGYIVSLIENNDYAGFNVKRLMKMQILKKLLTAMRNCLFHKDLLPILRLLFKVLMTSAFVSENIRSVATYIIYASQATGKSKPIRRSSVSIAVDRSDSNYISIKESGYAICEEFIDLLIKSNGEPSFLRRFSSMITPAWLLFLLRQQDIHYFICGIRLLNQSICSLGSSFLSKFSQKFHGFLILHDNLKDHIHLEELWLNLLFLSLGLGIRSVQFRTDLTYKQKLDFVLKNELDNILPLSEVFPSLFHAIQATLEKVSNVNGKLNSENVAALRYADDTMSFLVTLQTTYSFELTLNYDFSELLTKVVFPFLSPVDTITAEQEMRDLLHNIRQPLPRSSSSKTFGEGIKKSVRKFSMSGSFKRVVTPLGTQLRKDILNDSITDMENTSSFTASFPQSDQALQYFDNFTVQYAEAKDVIKGLLFSILTCIYNRITSGQGFSYSRLLVYLPPSQIEKKSTFFSGILRSTMSKLIEAVKNDKLLLAEPSILANISYIFTKFIRMHLLGYLKGSWLEIVDDLGSLLEEIISRPDFLAKLPKNGRNAAMNMYSCFLDLFLLEVSDLKQTECNAQSDKIIKSITYWQSLLFNSKTYQKDLFSLLWYAVYIMVETTTGVVRLQAVDAWRLLFLHSPGYLSDIAKTCNNDPRFAYEICKTLDNDSDKFVRWLDDNAAEVNQFMLSCFFCRWEDFLKQQHKLADEEASLLQFSRLEHLRKQLAQNTFNENILNESSASYHVWISSLFALECNRFKKMSQDQSDQENFVAAALLSQKNELSHENSILGSKTTSWELDSTEGSERMRKRLMPCLLQSSELDSKLEARSSGARRNRSFDTSVEAPVSLTNEEKQAATLILPSQEETLHDAARSDSNNSMEDEEDDVDEEDKEDKNRTVMRSIESGDSIQDVYNVSRIFGLEATEGILLLGKQYLYLMDNFFLRSDNEIVDVNDNSIIDERDPYLQLLHLQSLSSSGKVRRHISKENNWHWDFIDLSLVLKRFYLLRDVGLELFFKDGRSFLTILSNTKNRDSLYQKLVARAPGADVLSTSHFATSMSRDLGKANGKSNFLSSKLANALSFSTTHPATKRWERREISNFNYLQIVNTLAGRTYNDLTQYPVFPWVIADYTSKELDLNNPKTYRNFCKPMGAQHPERESQFNERYDLLLGLNDSQQQPFHYGTHYSSAMIVCSYLIRLRPFVDSYLALQGGQFDHADRLFYSIEQAWRSSSKENMADVRELIPEFFYLSEMFINGNGFDFGSRQKESTPINDVILPPWAKGDPAIFVQKNREALESKYVSAHLHEWIDLVFGCKQRGDEAVAATNVFHHLSYQGAIDLENIENEFELAAAVGIIHNFGQTPKQVFKKPHPQRGPDFTDTPLGPYLFGRFEDSIHLLFQSCSPIIRICKKVAHIQYDPSKDEVGAFAADYTPLGPNTFLAWGRVDNTVQLISDQLDKQPVMFEELHSEKITHVVACDERTFLTASLDLTLRLWTLSTNKPIKASLKRVLYGHRYRITCVTVCKAFSIIVSGDAGGNLIIWDLNRAEFVSSLSVYKLPIQTIAVNARNAEIAFSTGFYCCVVNVNGKILVKDKLSRIYNENSDENILCSCFYTGANSEWLHKNLFITGHPDGIIRIWEKRLQSNAKLEAEKNNADRPKWRFHLLRQLQHTKGLGRNRVATRQNIITITPNGQARGIFAGDDKGQVFSWMLPDTTSNVHLEKDNTSELCSLCDSRFSLMEWRSQCRACGNSNVCSDCVSMLKDTNIKTCYECYRQMPLCYKN.

Disordered stretches follow at residues Asp1654–Ser1679 and Ile1691–Thr1729. A compositionally biased stretch (acidic residues) spans Met1711–Lys1723. A BEACH-type PH domain is found at Glu1735–Val1870. One can recognise a BEACH domain in the interval Ala1907–Arg2202. WD repeat units lie at residues Lys2249 to Met2290, Leu2294 to Ala2332, Gly2340 to Ser2379, Asn2429 to Leu2475, and Ala2507 to His2546. The FYVE-type zinc finger occupies Asp2550–Pro2604.

It is found in the cytoplasm. The protein resides in the membrane. Functionally, may be involved in protein sorting and cell wall formation. The sequence is that of Beige protein homolog 1 (lvs1) from Schizosaccharomyces pombe (strain 972 / ATCC 24843) (Fission yeast).